Here is a 253-residue protein sequence, read N- to C-terminus: Cyclin-C1-1 (253 aa).

This sequence belongs to the cyclin family. Cyclin C subfamily.

In Arabidopsis thaliana (Mouse-ear cress), this protein is Cyclin-C1-1 (CYCC1-1).